Reading from the N-terminus, the 411-residue chain is Lissencephaly-1 homolog (411 aa).

The 33-residue stretch at 9–41 folds into the LisH domain; the sequence is QREELNQAIADYLGSNGYADSLEAFRKEADLST. The stretch at 56–83 forms a coiled coil; that stretch reads TSVIRLQKKVMELEAKLTEAEKEVIEGA. WD repeat units lie at residues 106-147, 148-187, 191-230, 233-272, 275-334, 337-376, and 379-411; these read GHRA…RSLK, GHTD…ECVK, GHDH…CVKT, GHRE…CKVE, DHEH…CLFT, GHDN…CMKT, and AHQH…WECR.

It belongs to the WD repeat LIS1/nudF family.

The protein resides in the cytoplasm. It localises to the cytoskeleton. It is found in the microtubule organizing center. Its subcellular location is the centrosome. Functionally, positively regulates the activity of the minus-end directed microtubule motor protein dynein. May enhance dynein-mediated microtubule sliding by targeting dynein to the microtubule plus end. Required for several dynein- and microtubule-dependent processes. This is Lissencephaly-1 homolog from Drosophila ananassae (Fruit fly).